The primary structure comprises 187 residues: Phosphatidylethanolamine-binding protein 1 (187 aa).

Residues Ser-6 and Ser-13 each carry the phosphoserine modification. Thr-42 is modified (phosphothreonine). Ser-52 and Ser-98 each carry phosphoserine. Residues 93-134 form an interaction with RAF1 region; sequence KGGNISSGTVLSDYVGSGPPKGTGLHRYVWLVYEQDGPLKCD.

Belongs to the phosphatidylethanolamine-binding protein family. In terms of assembly, has a tendency to form dimers by disulfide cross-linking. Interacts with RAF1 and this interaction is enhanced if RAF1 is phosphorylated on residues 'Ser-338', 'Ser-339', 'Tyr-340' and 'Tyr-341'. Interacts with ALOX15; in response to IL13/interleukin-13, prevents the interaction of PEBP1 with RAF1 to activate the ERK signaling cascade.

Its subcellular location is the cytoplasm. Binds ATP, opioids and phosphatidylethanolamine. Has lower affinity for phosphatidylinositol and phosphatidylcholine. Serine protease inhibitor which inhibits thrombin, neuropsin and chymotrypsin but not trypsin, tissue type plasminogen activator and elastase. Inhibits the kinase activity of RAF1 by inhibiting its activation and by dissociating the RAF1/MEK complex and acting as a competitive inhibitor of MEK phosphorylation. Functionally, HCNP may be involved in the function of the presynaptic cholinergic neurons of the central nervous system. HCNP increases the production of choline acetyltransferase but not acetylcholinesterase. Seems to be mediated by a specific receptor. This is Phosphatidylethanolamine-binding protein 1 (PEBP1) from Oryctolagus cuniculus (Rabbit).